A 499-amino-acid polypeptide reads, in one-letter code: MDNMNHEELNDQLLVRREKLHNLREQGIDPFGKRFERTNATNELLSLYGEFSKEELEEKEISVSIAGRIMTKRGKGKAGFAHIQDLHGQVQIYVRKDAVGDEEYELFKTADLGDLVGIEGKVFKTNVGELSVKATGFTLLTKSLRPLPDKYHGLKDVEQRYRQRYLDLITSMESRETFVTRSKIIREMRRYLDDNGYLEVETPMMHAIAGGASARPFITHHNALDMELYMRIAIELHLKRLIVGGLEKVYEIGRVFRNEGVSTRHNPEFTMIELYEAYADYKDIMKLTENMVAHIAKQVLGTTTIQYGDYEINLEPEWTRLHMVDAIKEHSGADFWNPMSVEEARELAKEHNVEIKDTMEVGHIINEFFEQKVEDKLIQPTFIYGHPVEISPLAKKNDEDPRFTDRFELFIVAREHANAFTELNDPIDQKERFEAQLKEREQGNDEAHMMDDDYIEALEYGMPPTGGLGIGIDRLVMLLTNAPSIRDVLLFPAMRHKQD.

Residues E408 and E415 each contribute to the Mg(2+) site.

The protein belongs to the class-II aminoacyl-tRNA synthetase family. As to quaternary structure, homodimer. Mg(2+) is required as a cofactor.

Its subcellular location is the cytoplasm. The enzyme catalyses tRNA(Lys) + L-lysine + ATP = L-lysyl-tRNA(Lys) + AMP + diphosphate. The polypeptide is Lysine--tRNA ligase (Bacillus cereus (strain ATCC 10987 / NRS 248)).